The following is a 173-amino-acid chain: Acetyl-CoA decarbonylase/synthase complex subunit epsilon (173 aa).

This sequence belongs to the CdhB family. As to quaternary structure, heterotetramer of two alpha and two epsilon subunits. The ACDS complex is made up of alpha, epsilon, beta, gamma and delta subunits with a probable stoichiometry of (alpha(2)epsilon(2))(4)-beta(8)-(gamma(1)delta(1))(8).

Its pathway is one-carbon metabolism; methanogenesis from acetate. In terms of biological role, part of a complex that catalyzes the reversible cleavage of acetyl-CoA, allowing growth on acetate as sole source of carbon and energy. The alpha-epsilon subcomponent functions as a carbon monoxide dehydrogenase. The precise role of the epsilon subunit is unclear; it may have a stabilizing role within the alpha(2)epsilon(2) component and/or be involved in electron transfer to FAD during a potential FAD-mediated CO oxidation. The sequence is that of Acetyl-CoA decarbonylase/synthase complex subunit epsilon from Methanothermobacter thermautotrophicus (strain ATCC 29096 / DSM 1053 / JCM 10044 / NBRC 100330 / Delta H) (Methanobacterium thermoautotrophicum).